A 72-amino-acid polypeptide reads, in one-letter code: Peptide Ctri9194 (72 aa).

The first 23 residues, 1-23 (MKTQNVLLSFGIVFLMISFSSET), serve as a signal peptide directing secretion. The residue at position 38 (Ile-38) is an Isoleucine amide. Residues 42-72 (SLKDVESLDFLFDPTFTAADLAVLENALEDY) constitute a propeptide that is removed on maturation.

The protein belongs to the non-disulfide-bridged peptide (NDBP) superfamily. Short antimicrobial peptide (group 4) family. Expressed by the venom gland.

It is found in the secreted. In terms of biological role, antimicrobial peptide. This chain is Peptide Ctri9194, found in Chaerilus tricostatus (Scorpion).